A 160-amino-acid polypeptide reads, in one-letter code: uncharacterized protein (160 aa).

Its subcellular location is the cytoplasm. The protein localises to the nucleus. This is an uncharacterized protein from Schizosaccharomyces pombe (strain 972 / ATCC 24843) (Fission yeast).